The primary structure comprises 464 residues: Meiotic plaque component protein 54 (464 aa).

The tract at residues 71 to 102 is disordered; that stretch reads SISTTITPNKSSLKSPRGKRASKNSFDNETKL. Coiled-coil stretches lie at residues 99 to 119, 156 to 193, and 231 to 365; these read ETKL…VNRC, KAEC…DHLL, and SINS…LQTQ.

Interacts directly with SPO21/MPC70, NUD1, SPO74 and SPC42. Probable component of a spindle pole body (SPB) complex composed of ADY3, SSP1, DON1, MPC54, SPO21/MPC70, NUD1 and CNM67.

Its subcellular location is the prospore membrane. The protein resides in the cytoplasm. It is found in the cytoskeleton. It localises to the microtubule organizing center. The protein localises to the spindle pole body. Its subcellular location is the spindle pole. Involved in the pathway that organizes the shaping and sizing of the prospore membrane (PSM) during sporulation. This is Meiotic plaque component protein 54 (MPC54) from Saccharomyces cerevisiae (strain ATCC 204508 / S288c) (Baker's yeast).